The following is a 510-amino-acid chain: NEDD8-activating enzyme E1 regulatory subunit (510 aa).

An N-acetylalanine modification is found at alanine 2. N6-acetyllysine occurs at positions 6 and 317. The tract at residues 307–320 (DMIADSGKYIKLQN) is interaction with UBA3.

This sequence belongs to the ubiquitin-activating E1 family. ULA1 subfamily. As to quaternary structure, heterodimer of UBA3 and NAE1. The complex binds NEDD8 and UBE2M. Binds APP and TP53BP2. In terms of processing, ubiquitinated by TRIP12, leading to its degradation by the proteasome.

The protein resides in the cell membrane. It participates in protein modification; protein neddylation. Binding of TP53BP2 to the regulatory subunit NAE1 decreases neddylation activity. Its function is as follows. Regulatory subunit of the dimeric UBA3-NAE1 E1 enzyme. E1 activates NEDD8 by first adenylating its C-terminal glycine residue with ATP, thereafter linking this residue to the side chain of the catalytic cysteine, yielding a NEDD8-UBA3 thioester and free AMP. E1 finally transfers NEDD8 to the catalytic cysteine of UBE2M. Necessary for cell cycle progression through the S-M checkpoint. Overexpression of NAE1 causes apoptosis through deregulation of NEDD8 conjugation. The covalent attachment of NEDD8 to target proteins is known as 'neddylation' and the process is involved in the regulation of cell growth, viability and development. This is NEDD8-activating enzyme E1 regulatory subunit (NAE1) from Macaca fascicularis (Crab-eating macaque).